The sequence spans 68 residues: Antimicrobial peptide UyCT3 (68 aa).

A signal peptide spans 1–23; it reads MKNQFVLLLLAIVFLQMIFQSDA. Phenylalanine 36 is modified (phenylalanine amide). Residues 40–68 constitute a propeptide that is removed on maturation; that stretch reads GLENMDKFDELFDGDLSEADLDFLKELMR.

The protein belongs to the non-disulfide-bridged peptide (NDBP) superfamily. Short antimicrobial peptide (group 4) family. In terms of processing, the non-amidated UyCT3 does not show antimicrobial activity. In terms of tissue distribution, expressed by the venom gland.

The protein resides in the secreted. It is found in the target cell membrane. In terms of biological role, antimicrobial peptide that inhibits the growth of Gram-positive (S.aureus, MIC=10 uM) and Gram-negative bacteria (E.coli, MIC=15 uM and P.aeruginosa, MIC=6 uM). It also shows 35% of hemolysis when 15 uM are tested (95% at 50 uM). The protein is Antimicrobial peptide UyCT3 of Urodacus yaschenkoi (Inland robust scorpion).